Reading from the N-terminus, the 326-residue chain is Eukaryotic translation initiation factor 3 subunit I (326 aa).

5 WD repeats span residues 8–47 (GHER…RLGT), 50–89 (GHQG…IIAS), 145–184 (MTES…KVVD), 188–227 (DHAA…CLKT), and 285–326 (GHFG…NIFE).

It belongs to the eIF-3 subunit I family. In terms of assembly, component of the eukaryotic translation initiation factor 3 (eIF-3) complex. The eIF-3 complex interacts with pix.

It is found in the cytoplasm. Functionally, component of the eukaryotic translation initiation factor 3 (eIF-3) complex, which is involved in protein synthesis of a specialized repertoire of mRNAs and, together with other initiation factors, stimulates binding of mRNA and methionyl-tRNAi to the 40S ribosome. The eIF-3 complex specifically targets and initiates translation of a subset of mRNAs involved in cell proliferation. The protein is Eukaryotic translation initiation factor 3 subunit I of Drosophila pseudoobscura pseudoobscura (Fruit fly).